Consider the following 87-residue polypeptide: MAHKKGASSSRNGRDSNAQRLGVKRFGGQSVSAGEILVRQRGTHFHPGVNVGRGGDDTLFALSAGAVEFGTKRGRKTVNIVPAAAEA.

A disordered region spans residues 1–25 (MAHKKGASSSRNGRDSNAQRLGVKR). The span at 7–19 (ASSSRNGRDSNAQ) shows a compositional bias: polar residues.

It belongs to the bacterial ribosomal protein bL27 family.

The sequence is that of Large ribosomal subunit protein bL27 from Rhodococcus jostii (strain RHA1).